The sequence spans 499 residues: Probable malate:quinone oxidoreductase 4 (499 aa).

The protein belongs to the MQO family. It depends on FAD as a cofactor.

The catalysed reaction is (S)-malate + a quinone = a quinol + oxaloacetate. The protein operates within carbohydrate metabolism; tricarboxylic acid cycle; oxaloacetate from (S)-malate (quinone route): step 1/1. This Staphylococcus epidermidis (strain ATCC 12228 / FDA PCI 1200) protein is Probable malate:quinone oxidoreductase 4.